The chain runs to 607 residues: Rap1 GTPase-GDP dissociation stimulator 1 (607 aa).

ARM repeat units lie at residues 89–131 (GLIS…DQAG) and 170–211 (DSLQ…NLAE). The interval 122 to 170 (EGRSAVDQAGGAQIVIDHLRSLCGRTDPASEKLMTVFCGMLMNYSNEND) is prevents binding to prenylated RHOA. Lysine 230 is modified (N6-acetyllysine). 3 ARM repeats span residues 347 to 390 (DGNC…NLAI), 391 to 431 (PVVN…MLID), and 479 to 519 (SKDV…LIAA).

As to quaternary structure, interacts with RABL3. Interacts with RHOT1. Interacts with unprenylated RHOA; the interaction is direct. Interacts with RAP1A. Interacts with KRAS. Interacts with RAC1. Interacts with RAP1B. Preferentially interacts with unprenylated GTPases that will become geranylgeranylated. May also interact with prenylated GTPases. In terms of assembly, interacts with prenylated RHOA; the interaction is direct and in a 1:1 stoichiometry. Interacts with RAP1A. Interacts with KRAS. Interacts with RAC1. Interacts with RAP1B. Preferentially interacts with prenylated GTPases. Post-translationally, serotonylated on Gln residues by TGM2 in response to hypoxia, leading to its inactivation.

The protein localises to the cytoplasm. Its subcellular location is the cytosol. It localises to the endoplasmic reticulum. The protein resides in the mitochondrion. It is found in the nucleus. In terms of biological role, acts as a GEF (guanine nucleotide exchange factor) for the Rho family of small GTP-binding proteins (G proteins) that stimulates the dissociation of GDP to enable subsequent binding of GTP. Additionally, appears to chaperone the processing and/or trafficking of small GTPases containing a C-terminal polybasic region independently of GEF activity. Targets include RAP1A/RAP1B, RHOA, RHOB, RHOC, RAC1 and KRAS. Regulates mitochondrial dynamics by controlling RHOT function to promote mitochondrial fission during high calcium conditions. Able to promote the Ca(2+) release from the endoplasmic reticulum via both inositol trisphosphate (Ins3P) and ryanodine sensitive receptors leading to a enhanced mitochondrial Ca(2+) uptake. Its function is as follows. Acts as a GEF (guanine nucleotide exchange factor) for unprenylated RHOA. Chaperones the entry and passage of small GTPases through the prenylation pathway. Recognizes the last amino acid in the GTPase C-terminal CAAX motif with a preference for 'Leu' over 'Met', indicating involvement in the geranylgeranylation pathway. May also recognize prenylated GTPases. Functionally, acts as a GEF (guanine nucleotide exchange factor) for prenylated RHOA. Acts as a GEF for RHOC. Chaperones the downstream trafficking and/or processing of small newly prenylated GTPases. Escorts RAC1 to the nucleus. The chain is Rap1 GTPase-GDP dissociation stimulator 1 from Mus musculus (Mouse).